Consider the following 359-residue polypeptide: Cinnamyl alcohol dehydrogenase 8 (359 aa).

Cysteine 46 contacts Zn(2+). Serine 48 contributes to the NADP(+) binding site. The Zn(2+) site is built by histidine 68, glutamate 69, cysteine 99, cysteine 102, cysteine 105, cysteine 113, and cysteine 162. Residues threonine 166, 187–192 (GLGGLG), 210–215 (STSEKK), threonine 250, glycine 274, and 297–299 (SMI) each bind NADP(+).

It belongs to the zinc-containing alcohol dehydrogenase family. In terms of assembly, homodimer. The cofactor is Zn(2+). In terms of tissue distribution, expressed in the differentiation and elongation zones of primary and lateral roots. Expressed in the hypocotyl, cotyledon veins, vasculature of the first rosette leaves, hydathodes and trichomes. In stems, expressed in the vascular cambium and developing xylem tissues. Expressed in the style, anthers, stamen filaments, stigmatic regions in flowers, and abscission and style regions of siliques.

It carries out the reaction (E)-cinnamyl alcohol + NADP(+) = (E)-cinnamaldehyde + NADPH + H(+). It participates in aromatic compound metabolism; phenylpropanoid biosynthesis. Its function is as follows. Involved in lignin biosynthesis. Catalyzes the final step specific for the production of lignin monomers. Catalyzes the NADPH-dependent reduction of coniferaldehyde, 5-hydroxyconiferaldehyde, sinapaldehyde, 4-coumaraldehyde and caffeyl aldehyde to their respective alcohols. In Arabidopsis thaliana (Mouse-ear cress), this protein is Cinnamyl alcohol dehydrogenase 8 (CAD8).